Consider the following 338-residue polypeptide: UbiA prenyltransferase domain-containing protein 1 (338 aa).

Residue A2 is modified to N-acetylalanine. The next 8 membrane-spanning stretches (helical) occupy residues 83-103, 134-154, 160-180, 188-208, 209-229, 245-267, 277-297, and 315-335; these read LLVG…LVNT, FGVF…YLSP, LALI…GIGF, LIIL…IQVG, SLAI…EAIL, IVTL…LLFL, THCT…FSLE, and LNLL…AGSL.

The protein belongs to the UbiA prenyltransferase family. Interacts with HMGCR and SOAT1. Ubiquitously expressed.

It is found in the endoplasmic reticulum membrane. It localises to the golgi apparatus membrane. The protein resides in the mitochondrion membrane. Its subcellular location is the cytoplasm. The protein localises to the nucleus. The enzyme catalyses menadiol + (2E,6E,10E)-geranylgeranyl diphosphate = menaquinol-4 + diphosphate. It carries out the reaction all-trans-decaprenyl diphosphate + 4-hydroxybenzoate = 4-hydroxy-3-(all-trans-decaprenyl)benzoate + diphosphate. Its pathway is quinol/quinone metabolism; menaquinone biosynthesis. It participates in cofactor biosynthesis; ubiquinone biosynthesis. Functionally, prenyltransferase that mediates the formation of menaquinone-4 (MK-4) and coenzyme Q10. MK-4 is a vitamin K2 isoform present at high concentrations in the brain, kidney and pancreas, and is required for endothelial cell development. Mediates the conversion of phylloquinone (PK) into MK-4, probably by cleaving the side chain of phylloquinone (PK) to release 2-methyl-1,4-naphthoquinone (menadione; K3) and then prenylating it with geranylgeranyl pyrophosphate (GGPP) to form MK-4. Also plays a role in cardiovascular development independently of MK-4 biosynthesis, by acting as a coenzyme Q10 biosynthetic enzyme: coenzyme Q10, also named ubiquinone, plays an important antioxidant role in the cardiovascular system. Mediates biosynthesis of coenzyme Q10 in the Golgi membrane, leading to protect cardiovascular tissues from NOS3/eNOS-dependent oxidative stress. The sequence is that of UbiA prenyltransferase domain-containing protein 1 from Homo sapiens (Human).